Here is a 218-residue protein sequence, read N- to C-terminus: ATP-dependent dethiobiotin synthetase BioD (218 aa).

Position 10 to 15 (10 to 15) interacts with ATP; it reads NAGKTT. Thr-14 contributes to the Mg(2+) binding site. Lys-35 is a catalytic residue. Thr-39 is a binding site for substrate. Mg(2+)-binding residues include His-52 and Glu-116. ATP is bound by residues 116–119 and 176–177; these read EGAG and LR.

It belongs to the dethiobiotin synthetase family. Homodimer. Mg(2+) serves as cofactor.

It is found in the cytoplasm. It catalyses the reaction (7R,8S)-7,8-diammoniononanoate + CO2 + ATP = (4R,5S)-dethiobiotin + ADP + phosphate + 3 H(+). Its pathway is cofactor biosynthesis; biotin biosynthesis; biotin from 7,8-diaminononanoate: step 1/2. In terms of biological role, catalyzes a mechanistically unusual reaction, the ATP-dependent insertion of CO2 between the N7 and N8 nitrogen atoms of 7,8-diaminopelargonic acid (DAPA, also called 7,8-diammoniononanoate) to form a ureido ring. The polypeptide is ATP-dependent dethiobiotin synthetase BioD (Helicobacter pylori (strain Shi470)).